A 251-amino-acid chain; its full sequence is NADPH-dependent oxidoreductase (251 aa).

It belongs to the flavin oxidoreductase frp family. FMN is required as a cofactor.

Reduces FMN, organic nitro compounds and disulfide DTNB. Involved in maintenance of the cellular redox state and the disulfide stress response. This is NADPH-dependent oxidoreductase (nfrA) from Staphylococcus aureus (strain Mu50 / ATCC 700699).